We begin with the raw amino-acid sequence, 149 residues long: Probable flagellum biosynthesis repressor protein FlbT (149 aa).

Belongs to the FlbT family.

In terms of biological role, has a post-transcriptional repressor function in flagellum biogenesis. Associates with the 5'-UTR of fljK mRNA and promotes its degradation. The chain is Probable flagellum biosynthesis repressor protein FlbT from Rhizobium johnstonii (strain DSM 114642 / LMG 32736 / 3841) (Rhizobium leguminosarum bv. viciae).